We begin with the raw amino-acid sequence, 381 residues long: Queuine tRNA-ribosyltransferase (381 aa).

Catalysis depends on D89, which acts as the Proton acceptor. Substrate is bound by residues 89-93, D143, Q187, and G214; that span reads DSGGF. Residues 245–251 form an RNA binding region; that stretch reads GVGKPED. Residue D264 is the Nucleophile of the active site. The segment at 269 to 273 is RNA binding; important for wobble base 34 recognition; sequence TRNAR. Residues C302, C304, C307, and H333 each contribute to the Zn(2+) site.

Belongs to the queuine tRNA-ribosyltransferase family. Homodimer. Within each dimer, one monomer is responsible for RNA recognition and catalysis, while the other monomer binds to the replacement base PreQ1. Zn(2+) serves as cofactor.

The enzyme catalyses 7-aminomethyl-7-carbaguanine + guanosine(34) in tRNA = 7-aminomethyl-7-carbaguanosine(34) in tRNA + guanine. It functions in the pathway tRNA modification; tRNA-queuosine biosynthesis. Functionally, catalyzes the base-exchange of a guanine (G) residue with the queuine precursor 7-aminomethyl-7-deazaguanine (PreQ1) at position 34 (anticodon wobble position) in tRNAs with GU(N) anticodons (tRNA-Asp, -Asn, -His and -Tyr). Catalysis occurs through a double-displacement mechanism. The nucleophile active site attacks the C1' of nucleotide 34 to detach the guanine base from the RNA, forming a covalent enzyme-RNA intermediate. The proton acceptor active site deprotonates the incoming PreQ1, allowing a nucleophilic attack on the C1' of the ribose to form the product. After dissociation, two additional enzymatic reactions on the tRNA convert PreQ1 to queuine (Q), resulting in the hypermodified nucleoside queuosine (7-(((4,5-cis-dihydroxy-2-cyclopenten-1-yl)amino)methyl)-7-deazaguanosine). The sequence is that of Queuine tRNA-ribosyltransferase from Pectobacterium carotovorum subsp. carotovorum (strain PC1).